The primary structure comprises 162 residues: MKVVLQRVSEASVDVVNELGTLDPTFEPQQIGPGFMILVGVTDEDGDKQIAWLAHKILNLRVFEDAQGKMNRSIQDIGGEILSISQFTLFADVHKGNRPSFIKAGKPEHADFMWIKFDEALRSGGVPVKEGRFGAHMRVGLVNDGPVTIVIDTEHDMPDGTR.

Positions G145–P146 match the Gly-cisPro motif, important for rejection of L-amino acids motif.

The protein belongs to the DTD family. In terms of assembly, homodimer.

The protein localises to the cytoplasm. It carries out the reaction glycyl-tRNA(Ala) + H2O = tRNA(Ala) + glycine + H(+). The enzyme catalyses a D-aminoacyl-tRNA + H2O = a tRNA + a D-alpha-amino acid + H(+). Its function is as follows. An aminoacyl-tRNA editing enzyme that deacylates mischarged D-aminoacyl-tRNAs. Also deacylates mischarged glycyl-tRNA(Ala), protecting cells against glycine mischarging by AlaRS. Acts via tRNA-based rather than protein-based catalysis; rejects L-amino acids rather than detecting D-amino acids in the active site. By recycling D-aminoacyl-tRNA to D-amino acids and free tRNA molecules, this enzyme counteracts the toxicity associated with the formation of D-aminoacyl-tRNA entities in vivo and helps enforce protein L-homochirality. The protein is D-aminoacyl-tRNA deacylase of Bifidobacterium longum (strain DJO10A).